The primary structure comprises 1068 residues: Self-sufficient cytochrome P450 monooxygenase CYP505U2 (1068 aa).

Residue C408 coordinates heme. The interval 464-498 is disordered; sequence TTAGMVPESVQSLRQAQKSGKPGNSKSSANESMVG. Residues 472-498 show a composition bias toward polar residues; that stretch reads SVQSLRQAQKSGKPGNSKSSANESMVG. The 142-residue stretch at 505-646 folds into the Flavodoxin-like domain; that stretch reads VSIFYGSNSG…DLEKWEESIL (142 aa). Residues 511–515 and 590–622 contribute to the FMN site; these read SNSGS and VFGC…QRVA. Residues 679 to 909 enclose the FAD-binding FR-type domain; sequence KEFLEATVTS…RRSNPAFHPP (231 aa).

This sequence in the N-terminal section; belongs to the cytochrome P450 family. FAD serves as cofactor. Requires FMN as cofactor. Heme is required as a cofactor.

It catalyses the reaction 2 oxidized [cytochrome P450] + NADPH = 2 reduced [cytochrome P450] + NADP(+) + H(+). The enzyme catalyses an organic molecule + reduced [NADPH--hemoprotein reductase] + O2 = an alcohol + oxidized [NADPH--hemoprotein reductase] + H2O + H(+). It carries out the reaction dodecanoate + reduced [NADPH--hemoprotein reductase] + O2 = 3-hydroxydodecanoate + oxidized [NADPH--hemoprotein reductase] + H2O + H(+). The catalysed reaction is dodecanoate + reduced [NADPH--hemoprotein reductase] + O2 = 7-hydroxydodecanoate + oxidized [NADPH--hemoprotein reductase] + H2O + H(+). It catalyses the reaction dodecan-1-ol + reduced [NADPH--hemoprotein reductase] + O2 = 1,4-dodecanediol + oxidized [NADPH--hemoprotein reductase] + H2O + H(+). The enzyme catalyses dodecan-1-ol + reduced [NADPH--hemoprotein reductase] + O2 = 1,3-dodecanediol + oxidized [NADPH--hemoprotein reductase] + H2O + H(+). In terms of biological role, self-sufficient cytochrome P450 monooxygenase that catalyzes the regioselective in-chain hydroxylation of alkanes, fatty alcohols, and fatty acids. Preferentially hydroxylates 1-dodecanol at C3 and C4 (positions omega-8 and omega-9). It is very likely that CYP505U2 prefers dodecanol, and probably other fatty alcohols, over fatty acids as substrates. Does not show any significant activity toward tetradecanoic acid. This chain is Self-sufficient cytochrome P450 monooxygenase CYP505U2, found in Exserohilum turcicum (strain 28A) (Northern leaf blight fungus).